The chain runs to 32 residues: Cytochrome b6-f complex subunit 7 (32 aa).

The helical transmembrane segment at 9–27 (AAVFWILIPIGLVGGALLL) threads the bilayer.

Belongs to the PetM family. In terms of assembly, the 4 large subunits of the cytochrome b6-f complex are cytochrome b6, subunit IV (17 kDa polypeptide, PetD), cytochrome f and the Rieske protein, while the 4 small subunits are PetG, PetL, PetM and PetN. The complex functions as a dimer.

It is found in the cellular thylakoid membrane. Functionally, component of the cytochrome b6-f complex, which mediates electron transfer between photosystem II (PSII) and photosystem I (PSI), cyclic electron flow around PSI, and state transitions. The chain is Cytochrome b6-f complex subunit 7 from Prochlorococcus marinus (strain MIT 9515).